The sequence spans 553 residues: Glucose-6-phosphate isomerase (553 aa).

D-glucose 6-phosphate is bound by residues 164-165, 215-220, Gln-359, Glu-363, His-394, and Lys-516; these read GS and SKTFTT. Glu-363 acts as the Proton donor in catalysis. Catalysis depends on residues His-394 and Lys-516.

It belongs to the GPI family. In terms of assembly, homodimer.

Its subcellular location is the cytoplasm. It localises to the cytosol. The catalysed reaction is alpha-D-glucose 6-phosphate = beta-D-fructose 6-phosphate. The protein operates within carbohydrate degradation; glycolysis; D-glyceraldehyde 3-phosphate and glycerone phosphate from D-glucose: step 2/4. In the cytoplasm, catalyzes the conversion of glucose-6-phosphate to fructose-6-phosphate, the second step in glycolysis, and the reverse reaction during gluconeogenesis. This chain is Glucose-6-phosphate isomerase (pgiA), found in Aspergillus oryzae (strain ATCC 42149 / RIB 40) (Yellow koji mold).